The sequence spans 403 residues: Phosphoglycerate kinase (403 aa).

Residues 21-23 (DFN), R36, 59-62 (HLGR), R119, and R154 each bind substrate. ATP-binding positions include K207, G299, E330, and 357-360 (GGDA).

The protein belongs to the phosphoglycerate kinase family. Monomer.

It is found in the cytoplasm. It carries out the reaction (2R)-3-phosphoglycerate + ATP = (2R)-3-phospho-glyceroyl phosphate + ADP. Its pathway is carbohydrate degradation; glycolysis; pyruvate from D-glyceraldehyde 3-phosphate: step 2/5. The chain is Phosphoglycerate kinase from Chlamydia caviae (strain ATCC VR-813 / DSM 19441 / 03DC25 / GPIC) (Chlamydophila caviae).